A 217-amino-acid chain; its full sequence is Protein-L-isoaspartate O-methyltransferase (217 aa).

Ser-61 is an active-site residue.

This sequence belongs to the methyltransferase superfamily. L-isoaspartyl/D-aspartyl protein methyltransferase family.

Its subcellular location is the cytoplasm. The enzyme catalyses [protein]-L-isoaspartate + S-adenosyl-L-methionine = [protein]-L-isoaspartate alpha-methyl ester + S-adenosyl-L-homocysteine. Functionally, catalyzes the methyl esterification of L-isoaspartyl residues in peptides and proteins that result from spontaneous decomposition of normal L-aspartyl and L-asparaginyl residues. It plays a role in the repair and/or degradation of damaged proteins. The sequence is that of Protein-L-isoaspartate O-methyltransferase from Syntrophotalea carbinolica (strain DSM 2380 / NBRC 103641 / GraBd1) (Pelobacter carbinolicus).